Here is a 484-residue protein sequence, read N- to C-terminus: MTRKIMLQGTGSDVGKSVLVAGLCRLASNRGLSVKPFKPQNMSNNAAVSDDGGEIGRAQWLQALAARVPSSVHMNPVLLKPQSDVGSQVVVQGRVAGQARGKEYQALKPGLLGSVMESFELVSAGADLVIVEGAGSPAEINLRAGDIANMGFATRAGVPVVLVGDIDRGGVIASLVGTHAILSDEDRRMVTGYLINKFRGDVTLFDDGIASIRTFTGWPCFGVVPWLKSAGRLPAEDSVVLERLARGGGKALKVAVPVLSRIANFDDLDPLAAEPDVEIVFVRPGTPLPDDAALVVIPGSKSTIADLEDFRRQGWDRDLDRHIRRGGRVIGICGGYQMLGTRVIDPLGIEGGKREIEGLGLLSVETEMAPEKTVRNSRAWSREYGVLLEGYEIHLGRTAGIDCGRAPVEIDGRRDGAMSADGRVMGTYLHGLFGSDPYRAELLRSFGIEGGGGNYRQSVDAALDEIAAELDAVLDRVWLETLLG.

In terms of domain architecture, GATase cobBQ-type spans 251–438; the sequence is ALKVAVPVLS…LHGLFGSDPY (188 aa). The active-site Nucleophile is cysteine 333. Histidine 430 is a catalytic residue.

It belongs to the CobB/CobQ family. CobQ subfamily.

Its pathway is cofactor biosynthesis; adenosylcobalamin biosynthesis. Catalyzes amidations at positions B, D, E, and G on adenosylcobyrinic A,C-diamide. NH(2) groups are provided by glutamine, and one molecule of ATP is hydrogenolyzed for each amidation. The polypeptide is Cobyric acid synthase (Sinorhizobium medicae (strain WSM419) (Ensifer medicae)).